The following is a 204-amino-acid chain: Imidazole glycerol phosphate synthase subunit HisH (204 aa).

Residues 5 to 204 form the Glutamine amidotransferase type-1 domain; that stretch reads KVVIIDTGCA…AKLIQNFLEL (200 aa). C80 (nucleophile) is an active-site residue. Catalysis depends on residues H186 and E188.

In terms of assembly, heterodimer of HisH and HisF.

It localises to the cytoplasm. It catalyses the reaction 5-[(5-phospho-1-deoxy-D-ribulos-1-ylimino)methylamino]-1-(5-phospho-beta-D-ribosyl)imidazole-4-carboxamide + L-glutamine = D-erythro-1-(imidazol-4-yl)glycerol 3-phosphate + 5-amino-1-(5-phospho-beta-D-ribosyl)imidazole-4-carboxamide + L-glutamate + H(+). The enzyme catalyses L-glutamine + H2O = L-glutamate + NH4(+). Its pathway is amino-acid biosynthesis; L-histidine biosynthesis; L-histidine from 5-phospho-alpha-D-ribose 1-diphosphate: step 5/9. Functionally, IGPS catalyzes the conversion of PRFAR and glutamine to IGP, AICAR and glutamate. The HisH subunit catalyzes the hydrolysis of glutamine to glutamate and ammonia as part of the synthesis of IGP and AICAR. The resulting ammonia molecule is channeled to the active site of HisF. The chain is Imidazole glycerol phosphate synthase subunit HisH from Vibrio parahaemolyticus serotype O3:K6 (strain RIMD 2210633).